The primary structure comprises 94 residues: Small ribosomal subunit protein uS19 (94 aa).

Belongs to the universal ribosomal protein uS19 family.

Protein S19 forms a complex with S13 that binds strongly to the 16S ribosomal RNA. In Desulforamulus reducens (strain ATCC BAA-1160 / DSM 100696 / MI-1) (Desulfotomaculum reducens), this protein is Small ribosomal subunit protein uS19.